The chain runs to 257 residues: Triosephosphate isomerase (257 aa).

Residues N12 and K14 each contribute to the substrate site. H98 (electrophile) is an active-site residue. E169 (proton acceptor) is an active-site residue.

It belongs to the triosephosphate isomerase family. In terms of assembly, homodimer.

It carries out the reaction D-glyceraldehyde 3-phosphate = dihydroxyacetone phosphate. It functions in the pathway carbohydrate biosynthesis; gluconeogenesis. The protein operates within carbohydrate degradation; glycolysis; D-glyceraldehyde 3-phosphate from glycerone phosphate: step 1/1. The polypeptide is Triosephosphate isomerase (tpiA) (Dictyostelium discoideum (Social amoeba)).